The chain runs to 354 residues: S-adenosylmethionine:tRNA ribosyltransferase-isomerase (354 aa).

It belongs to the QueA family. As to quaternary structure, monomer.

It localises to the cytoplasm. The enzyme catalyses 7-aminomethyl-7-carbaguanosine(34) in tRNA + S-adenosyl-L-methionine = epoxyqueuosine(34) in tRNA + adenine + L-methionine + 2 H(+). Its pathway is tRNA modification; tRNA-queuosine biosynthesis. In terms of biological role, transfers and isomerizes the ribose moiety from AdoMet to the 7-aminomethyl group of 7-deazaguanine (preQ1-tRNA) to give epoxyqueuosine (oQ-tRNA). The sequence is that of S-adenosylmethionine:tRNA ribosyltransferase-isomerase from Pseudomonas savastanoi pv. phaseolicola (strain 1448A / Race 6) (Pseudomonas syringae pv. phaseolicola (strain 1448A / Race 6)).